Here is a 187-residue protein sequence, read N- to C-terminus: Ribosome-recycling factor (187 aa).

The protein belongs to the RRF family.

It localises to the cytoplasm. Functionally, responsible for the release of ribosomes from messenger RNA at the termination of protein biosynthesis. May increase the efficiency of translation by recycling ribosomes from one round of translation to another. The polypeptide is Ribosome-recycling factor (Methylobacterium sp. (strain 4-46)).